A 406-amino-acid chain; its full sequence is Tryptophan synthase beta chain (406 aa).

N6-(pyridoxal phosphate)lysine is present on Lys99.

Belongs to the TrpB family. As to quaternary structure, tetramer of two alpha and two beta chains. It depends on pyridoxal 5'-phosphate as a cofactor.

The enzyme catalyses (1S,2R)-1-C-(indol-3-yl)glycerol 3-phosphate + L-serine = D-glyceraldehyde 3-phosphate + L-tryptophan + H2O. It participates in amino-acid biosynthesis; L-tryptophan biosynthesis; L-tryptophan from chorismate: step 5/5. Functionally, the beta subunit is responsible for the synthesis of L-tryptophan from indole and L-serine. In Rhizobium johnstonii (strain DSM 114642 / LMG 32736 / 3841) (Rhizobium leguminosarum bv. viciae), this protein is Tryptophan synthase beta chain.